A 417-amino-acid polypeptide reads, in one-letter code: UDP-N-acetylglucosamine 1-carboxyvinyltransferase (417 aa).

Position 22 to 23 (22 to 23) interacts with phosphoenolpyruvate; it reads KN. Arg-93 is a UDP-N-acetyl-alpha-D-glucosamine binding site. Cys-117 acts as the Proton donor in catalysis. Residue Cys-117 is modified to 2-(S-cysteinyl)pyruvic acid O-phosphothioketal. UDP-N-acetyl-alpha-D-glucosamine is bound by residues 122 to 126, Asp-304, and Ile-326; that span reads RPVDQ.

Belongs to the EPSP synthase family. MurA subfamily.

The protein resides in the cytoplasm. It catalyses the reaction phosphoenolpyruvate + UDP-N-acetyl-alpha-D-glucosamine = UDP-N-acetyl-3-O-(1-carboxyvinyl)-alpha-D-glucosamine + phosphate. The protein operates within cell wall biogenesis; peptidoglycan biosynthesis. Functionally, cell wall formation. Adds enolpyruvyl to UDP-N-acetylglucosamine. This is UDP-N-acetylglucosamine 1-carboxyvinyltransferase from Neisseria meningitidis serogroup C (strain 053442).